Here is a 503-residue protein sequence, read N- to C-terminus: Maturase K (503 aa).

It belongs to the intron maturase 2 family. MatK subfamily.

The protein resides in the plastid. Its subcellular location is the chloroplast. Usually encoded in the trnK tRNA gene intron. Probably assists in splicing its own and other chloroplast group II introns. In Diospyros kaki (Kaki persimmon), this protein is Maturase K.